Consider the following 129-residue polypeptide: Small ribosomal subunit protein uS11 (129 aa).

It belongs to the universal ribosomal protein uS11 family. Part of the 30S ribosomal subunit. Interacts with proteins S7 and S18. Binds to IF-3.

Located on the platform of the 30S subunit, it bridges several disparate RNA helices of the 16S rRNA. Forms part of the Shine-Dalgarno cleft in the 70S ribosome. This is Small ribosomal subunit protein uS11 from Lactobacillus gasseri (strain ATCC 33323 / DSM 20243 / BCRC 14619 / CIP 102991 / JCM 1131 / KCTC 3163 / NCIMB 11718 / NCTC 13722 / AM63).